Reading from the N-terminus, the 420-residue chain is Putative zinc metalloprotease Lmo1318 (420 aa).

Residue His-18 coordinates Zn(2+). The active site involves Glu-19. His-22 is a binding site for Zn(2+). 4 consecutive transmembrane segments (helical) span residues 172–194 (TIFA…LAFV), 304–326 (NWIV…LDML), 347–369 (VLNW…LPAL), and 393–412 (GIIH…LVTW). A PDZ domain is found at 176-267 (GPLFNFILAI…DGKTQDIDVK (92 aa)).

The protein belongs to the peptidase M50B family. It depends on Zn(2+) as a cofactor.

The protein localises to the cell membrane. The sequence is that of Putative zinc metalloprotease Lmo1318 from Listeria monocytogenes serovar 1/2a (strain ATCC BAA-679 / EGD-e).